A 189-amino-acid chain; its full sequence is Small ribosomal subunit protein uS5 (189 aa).

Residues 22–85 enclose the S5 DRBM domain; it reads FVDKLVAINR…ESAKRDLIFV (64 aa).

The protein belongs to the universal ribosomal protein uS5 family. Part of the 30S ribosomal subunit. Contacts proteins S4 and S8.

In terms of biological role, with S4 and S12 plays an important role in translational accuracy. Functionally, located at the back of the 30S subunit body where it stabilizes the conformation of the head with respect to the body. The polypeptide is Small ribosomal subunit protein uS5 (Allorhizobium ampelinum (strain ATCC BAA-846 / DSM 112012 / S4) (Agrobacterium vitis (strain S4))).